A 1119-amino-acid polypeptide reads, in one-letter code: Period circadian protein homolog 3 (1119 aa).

The disordered stretch occupies residues 1 to 48; it reads MDPCGNPAVPGGDCPQTRGPGLQGSSGQEGPLQGICVDSSHSEHEDRN. A Nuclear export signal 1 motif is present at residues 54–63; that stretch reads LIMVVQEMKK. 2 consecutive PAS domains span residues 120 to 187 and 259 to 325; these read LASE…PTQL and YEAP…KVLK. Residues 334-377 enclose the PAC domain; the sequence is HSPIRFCTQNGDYVILDSSWSSFVNPWSRKVSFIIGRHKVRTSP. The Nuclear export signal 3 motif lies at 400–409; sequence LQEQIHRLLL. Over residues 419-428 the composition is skewed to low complexity; the sequence is GYGSLGSSGS. 4 disordered regions span residues 419-449, 483-530, 718-744, and 878-910; these read GYGS…VEEA, VKPV…SSSY, HSRC…SSSS, and LEPT…SRSS. Composition is skewed to polar residues over residues 429-442 and 491-515; these read QEQH…SESS and TEPQ…STDT. Positions 551–750 are CSNK1E binding domain; that stretch reads LKRKCISCTN…SSSSAHLCPH (200 aa). A Nuclear localization signal motif is present at residues 720-739; the sequence is RCAGSERRKHKRKKLPTPVD. Positions 885–903 are enriched in basic and acidic residues; it reads HGPRRVEENWETHSEEEHP. Serine 907 carries the post-translational modification Phosphoserine. The Nuclear export signal 2 motif lies at 913 to 920; that stretch reads LQLNLLQE. The tract at residues 947–1011 is disordered; it reads GNSGSRSPPC…QDTHRDRAFS (65 aa). A compositionally biased stretch (low complexity) spans 970–988; that stretch reads SPSAAASGSSASSVHGSGS. Polar residues predominate over residues 989 to 1001; the sequence is DYTSEVSENGQRS. The segment at 1037–1119 is CRY binding domain; sequence ERGRDTVLRE…VQQKTPVEQL (83 aa).

In terms of assembly, homodimer. Component of the circadian core oscillator, which includes the CRY proteins, CLOCK or NPAS2, BMAL1 or BMAL2, CSNK1D and/or CSNK1E, TIMELESS and the PER proteins. Interacts directly with PER1, PER2, CRY1, CRY2, and TIMELESS; interaction with CRY1 and CRY2 is weak and not rhythmic. Interacts with FBXW11 and BTRC. Post-translationally, phosphorylation by CSNK1E is weak and appears to require association with PER1 and translocation to the nucleus. In terms of processing, ubiquitinated.

The protein resides in the cytoplasm. It is found in the nucleus. In terms of biological role, originally described as a core component of the circadian clock. The circadian clock, an internal time-keeping system, regulates various physiological processes through the generation of approximately 24 hour circadian rhythms in gene expression, which are translated into rhythms in metabolism and behavior. It is derived from the Latin roots 'circa' (about) and 'diem' (day) and acts as an important regulator of a wide array of physiological functions including metabolism, sleep, body temperature, blood pressure, endocrine, immune, cardiovascular, and renal function. Consists of two major components: the central clock, residing in the suprachiasmatic nucleus (SCN) of the brain, and the peripheral clocks that are present in nearly every tissue and organ system. Both the central and peripheral clocks can be reset by environmental cues, also known as Zeitgebers (German for 'timegivers'). The predominant Zeitgeber for the central clock is light, which is sensed by retina and signals directly to the SCN. The central clock entrains the peripheral clocks through neuronal and hormonal signals, body temperature and feeding-related cues, aligning all clocks with the external light/dark cycle. Circadian rhythms allow an organism to achieve temporal homeostasis with its environment at the molecular level by regulating gene expression to create a peak of protein expression once every 24 hours to control when a particular physiological process is most active with respect to the solar day. Transcription and translation of core clock components (CLOCK, NPAS2, BMAL1, BMAL2, PER1, PER2, PER3, CRY1 and CRY2) plays a critical role in rhythm generation, whereas delays imposed by post-translational modifications (PTMs) are important for determining the period (tau) of the rhythms (tau refers to the period of a rhythm and is the length, in time, of one complete cycle). A diurnal rhythm is synchronized with the day/night cycle, while the ultradian and infradian rhythms have a period shorter and longer than 24 hours, respectively. Disruptions in the circadian rhythms contribute to the pathology of cardiovascular diseases, cancer, metabolic syndromes and aging. A transcription/translation feedback loop (TTFL) forms the core of the molecular circadian clock mechanism. Transcription factors, CLOCK or NPAS2 and BMAL1 or BMAL2, form the positive limb of the feedback loop, act in the form of a heterodimer and activate the transcription of core clock genes and clock-controlled genes (involved in key metabolic processes), harboring E-box elements (5'-CACGTG-3') within their promoters. The core clock genes: PER1/2/3 and CRY1/2 which are transcriptional repressors form the negative limb of the feedback loop and interact with the CLOCK|NPAS2-BMAL1|BMAL2 heterodimer inhibiting its activity and thereby negatively regulating their own expression. This heterodimer also activates nuclear receptors NR1D1, NR1D2, RORA, RORB and RORG, which form a second feedback loop and which activate and repress BMAL1 transcription, respectively. Has a redundant role with the other PER proteins PER1 and PER2 and is not essential for the circadian rhythms maintenance. In contrast, plays an important role in sleep-wake timing and sleep homeostasis probably through the transcriptional regulation of sleep homeostasis-related genes, without influencing circadian parameters. Can bind heme. This is Period circadian protein homolog 3 (Per3) from Rattus norvegicus (Rat).